Consider the following 397-residue polypeptide: MTNNGNEPNLTLSDLYDKDVVYTSRPSYISNPWLKPDEHQSNFLTGRELLIANQLPVIVHEASATDKLHQLFQVIGKEVPNSIYTFNNQQSYENLIKQLAHKENKKIYFQYIHDETILNQQYYALDKTLFVALNNKARIPEWTNGKFLPKRKVVKIEQFENEIKNWEFPLVIKPGDDLPTAGGYGVMICYHDADLQKAITRIKEATAETNSLIIEQKIEEKANYCVQFAYSESLGIQYLGAATQLTDKYGFYNGNENTTNVPEHVIEAGRQIMENGVNQGFFGVAGFDLLVDEDDNVYAIDLNFRQNGSTSMLLLANELNSGYQKFYSYHSKGDNTHFFNTILKYVKEGSLYPLSYYDGDWYGEDKVKSRFGCIWHGDSKETVLENERAFLAELEHY.

Positions 131-347 (VALNNKARIP…FFNTILKYVK (217 aa)) constitute an ATP-grasp domain. ADP-binding residues include K136, V171, K173, G183, V186, I188, E215, Q216, I218, N223, and T246. D288 is a binding site for Mg(2+). 2 residues coordinate ADP: L290 and I300. D301 is a binding site for Mg(2+). The active-site Critical for catalysis is R305.

As to quaternary structure, primarily a monomer in solution. Minor homodimer formation. Mg(2+) serves as cofactor.

It carries out the reaction L-aspartate + L-methionine + ATP = L-aspartyl-L-methionine + ADP + phosphate + H(+). It functions in the pathway amino-acid metabolism. In terms of biological role, L-amino acid ligase, which preferentially catalyzes the formation of L-aspartyl-L-methionine dipeptide from L-aspartate and L-methionine in the presence of ATP. Less active with L-asparagine and L-methionine as substrates. Less active with L-aspartate and either L-phenylalanine, L-valine, L-leucine or L-isoleucine as substrates. Decreased activity when L-methionine is substituted with seleno-DL-methionine, L-homocysteine, L-methionine sulfoxide, L-methionine sulfoximine and o-acetyl-L-serine. Decreased activity with acetylation of L-methionine amino group. Decreased activity by modification of L-methionine carboxylate to L-methionine methyl ester. No activity when L-methionine is substituted with L-homoserine. No activity with formylation of L-methionine amino group. No activity by modification of L-methionine carboxylate to L-methionine-glycine carboxylate. No activity when L-aspartate substrate is replaced by analogs such as L-homoserine, DL-aspartate beta-methyl ester, L-glutamate or o-acetyl-L-serine. No activity when L-aspartate amino and alpha-carboxylate groups are modified to L-malate, glycine-L-aspartate, L-aspartate-glycine or N-carbamoyl-DL-aspartate. No activity with L-methionine or L-aspartate as sole substrates. No activity in presence of other nucleoside triphosphates including GTP, CTP, UTP, TTP or ITP. Involved in sulfur amino acid metabolism. The protein is L-aspartate--L-methionine ligase of Staphylococcus aureus (strain NCTC 8325 / PS 47).